The following is a 266-amino-acid chain: Ribosomal RNA small subunit methyltransferase A (266 aa).

S-adenosyl-L-methionine contacts are provided by asparagine 11, leucine 13, glycine 37, glutamate 57, aspartate 85, and asparagine 104.

The protein belongs to the class I-like SAM-binding methyltransferase superfamily. rRNA adenine N(6)-methyltransferase family. RsmA subfamily.

The protein resides in the cytoplasm. The catalysed reaction is adenosine(1518)/adenosine(1519) in 16S rRNA + 4 S-adenosyl-L-methionine = N(6)-dimethyladenosine(1518)/N(6)-dimethyladenosine(1519) in 16S rRNA + 4 S-adenosyl-L-homocysteine + 4 H(+). Specifically dimethylates two adjacent adenosines (A1518 and A1519) in the loop of a conserved hairpin near the 3'-end of 16S rRNA in the 30S particle. May play a critical role in biogenesis of 30S subunits. In Campylobacter jejuni (strain RM1221), this protein is Ribosomal RNA small subunit methyltransferase A.